The sequence spans 128 residues: MRHRKSGRKLNRNSSHRKAMFRNMSASLFEHEMIKTTVAKAKELRGVAEPLITLAKQDSVHNRRIAFSRLRDKAAVGKLFSELGPRYESRPGGYVRILKCGFRPGDNAPMAYVELVDRPQVESTESED.

The protein belongs to the bacterial ribosomal protein bL17 family. Part of the 50S ribosomal subunit. Contacts protein L32.

In Hydrogenovibrio crunogenus (strain DSM 25203 / XCL-2) (Thiomicrospira crunogena), this protein is Large ribosomal subunit protein bL17.